The following is a 220-amino-acid chain: tRNA (guanine-N(7)-)-methyltransferase (220 aa).

The S-adenosyl-L-methionine site is built by Glu-42, Glu-67, and Asp-122. Asp-122 is a catalytic residue. Substrate contacts are provided by residues Lys-126, Asp-158, and 198-201 (TEYE).

The protein belongs to the class I-like SAM-binding methyltransferase superfamily. TrmB family.

It catalyses the reaction guanosine(46) in tRNA + S-adenosyl-L-methionine = N(7)-methylguanosine(46) in tRNA + S-adenosyl-L-homocysteine. It functions in the pathway tRNA modification; N(7)-methylguanine-tRNA biosynthesis. Its function is as follows. Catalyzes the formation of N(7)-methylguanine at position 46 (m7G46) in tRNA. The chain is tRNA (guanine-N(7)-)-methyltransferase from Mycoplasma capricolum subsp. capricolum (strain California kid / ATCC 27343 / NCTC 10154).